The sequence spans 205 residues: Molybdenum cofactor guanylyltransferase (205 aa).

GTP is bound by residues 14–16 (LAG), K27, D77, and D107. A Mg(2+)-binding site is contributed by D107.

Belongs to the MobA family. In terms of assembly, monomer. It depends on Mg(2+) as a cofactor.

The protein localises to the cytoplasm. It carries out the reaction Mo-molybdopterin + GTP + H(+) = Mo-molybdopterin guanine dinucleotide + diphosphate. In terms of biological role, transfers a GMP moiety from GTP to Mo-molybdopterin (Mo-MPT) cofactor (Moco or molybdenum cofactor) to form Mo-molybdopterin guanine dinucleotide (Mo-MGD) cofactor. In Burkholderia lata (strain ATCC 17760 / DSM 23089 / LMG 22485 / NCIMB 9086 / R18194 / 383), this protein is Molybdenum cofactor guanylyltransferase.